The following is a 1011-amino-acid chain: Poly [ADP-ribose] polymerase 1 (1011 aa).

PARP-type zinc fingers lie at residues 9-91 (YRAE…ETGA) and 113-203 (FAAE…PATK). The Zn(2+) site is built by cysteine 21, cysteine 24, histidine 53, cysteine 56, cysteine 125, cysteine 128, histidine 159, and cysteine 162. The disordered stretch occupies residues 198-235 (QLPATKTEGKRKGEEVDGNVVAKKKSRKEKEKESKQEK). Short sequence motifs (nuclear localization signal) lie at residues 207–209 (KRK) and 220–225 (KKKSRK). One can recognise a PADR1 zinc-binding domain in the interval 224-358 (RKEKEKESKQ…CKKQDRIFPP (135 aa)). Over residues 225-235 (KEKEKESKQEK) the composition is skewed to basic and acidic residues. The zinc ribbon stretch occupies residues 289–331 (GALLPCEECKGQFVFKSDAYYCSGDITAWTKCVAKTQTPNRKD). Zn(2+)-binding residues include cysteine 294, cysteine 297, cysteine 310, and cysteine 320. The interval 359–378 (EAATVNSAPPPPASAPLTET) is disordered. An automodification domain region spans residues 371–522 (ASAPLTETVT…PSKSEKKMKL (152 aa)). One can recognise a BRCT domain in the interval 382 to 473 (PQDKPLTNMK…KGFQELLSLH (92 aa)). PolyADP-ribosyl glutamic acid is present on residues glutamate 403, glutamate 404, glutamate 410, glutamate 411, glutamate 432, glutamate 434, glutamate 441, glutamate 442, glutamate 453, glutamate 454, glutamate 468, glutamate 481, glutamate 485, glutamate 488, glutamate 509, glutamate 510, and glutamate 517. The segment at 496 to 519 (SKPANMKSAGKVKEEQGPSKSEKK) is disordered. The span at 506 to 519 (KVKEEQGPSKSEKK) shows a compositional bias: basic and acidic residues. One can recognise a WGR domain in the interval 539–635 (SAHVFEKGGK…KNFTKYPKKF (97 aa)). The PARP alpha-helical domain occupies 659–776 (KSKLAKPIQD…DIEVAYSLLR (118 aa)). Residues 785 to 1011 (DPIDINYEKL…LKFNYKTSLW (227 aa)) enclose the PARP catalytic domain. Residues 859–861 (HGS), glycine 868, arginine 875, and serine 901 each bind NAD(+). Catalysis depends on glutamate 985, which acts as the For poly [ADP-ribose] polymerase activity.

It belongs to the ARTD/PARP family. As to quaternary structure, homodimer; PARP-type zinc-fingers from separate parp1 molecules form a dimer module that specifically recognizes DNA strand breaks. In terms of processing, poly-ADP-ribosylated on serine, glutamate and aspartate residues by autocatalysis. Auto-ADP-ribosylation on serine takes place following interaction with HPF1. Auto poly-ADP-ribosylation on serine residues promotes its dissociation from chromatin.

It is found in the chromosome. Its subcellular location is the nucleus. The protein localises to the nucleolus. It localises to the cytoplasm. The protein resides in the cytosol. The enzyme catalyses NAD(+) + (ADP-D-ribosyl)n-acceptor = nicotinamide + (ADP-D-ribosyl)n+1-acceptor + H(+).. It carries out the reaction L-seryl-[protein] + NAD(+) = O-(ADP-D-ribosyl)-L-seryl-[protein] + nicotinamide + H(+). It catalyses the reaction L-aspartyl-[protein] + NAD(+) = 4-O-(ADP-D-ribosyl)-L-aspartyl-[protein] + nicotinamide. The catalysed reaction is L-glutamyl-[protein] + NAD(+) = 5-O-(ADP-D-ribosyl)-L-glutamyl-[protein] + nicotinamide. The enzyme catalyses L-tyrosyl-[protein] + NAD(+) = O-(ADP-D-ribosyl)-L-tyrosyl-[protein] + nicotinamide + H(+). It carries out the reaction L-histidyl-[protein] + NAD(+) = N(tele)-(ADP-D-ribosyl)-L-histidyl-[protein] + nicotinamide + H(+). ADP-ribosyltransferase activity is regulated via an allosteric activation mechanism. In absence of activation signal, parp1 is autoinhibited by the PARP alpha-helical domain (also named HD region), which prevents effective NAD(+)-binding. Activity is highly stimulated by signals, such as DNA strand breaks. Binding to damaged DNA unfolds the PARP alpha-helical domain, relieving autoinhibition. Poly-ADP-ribosyltransferase activity is tightly regulated and parp1 is removed from damaged chromatin following initial poly-ADP-ribosylation of chromatin to avoid prolonged residence (trapping) that has cytotoxic consequences. A number of factors or post-translational modifications (auto-poly-ADP-ribosylation) promote parp1 removal from chromatin. Functionally, poly-ADP-ribosyltransferase that mediates poly-ADP-ribosylation of proteins and plays a key role in DNA repair. Mediates glutamate, aspartate, serine, histidine or tyrosine ADP-ribosylation of proteins: the ADP-D-ribosyl group of NAD(+) is transferred to the acceptor carboxyl group of target residues and further ADP-ribosyl groups are transferred to the 2'-position of the terminal adenosine moiety, building up a polymer with an average chain length of 20-30 units. Serine ADP-ribosylation of proteins constitutes the primary form of ADP-ribosylation of proteins in response to DNA damage. Specificity for the different amino acids is conferred by interacting factors, such as hpf1 and nmnat1. Following interaction with hpf1, catalyzes serine ADP-ribosylation of target proteins; hpf1 confers serine specificity by completing the parp1 active site. Also catalyzes tyrosine ADP-ribosylation of target proteins following interaction with hpf1. Following interaction with nmnat1, catalyzes glutamate and aspartate ADP-ribosylation of target proteins; nmnat1 confers glutamate and aspartate specificity. Parp1 initiates the repair of DNA breaks: recognizes and binds DNA breaks within chromatin and recruits hpf1, licensing serine ADP-ribosylation of target proteins, such as histones (H2BS6ADPr and H3S10ADPr), thereby promoting decompaction of chromatin and the recruitment of repair factors leading to the reparation of DNA strand breaks. In addition to base excision repair (BER) pathway, also involved in double-strand breaks (DSBs) repair. Mediates the poly-ADP-ribosylation of a number of proteins. In addition to proteins, also able to ADP-ribosylate DNA: catalyzes ADP-ribosylation of DNA strand break termini containing terminal phosphates and a 2'-OH group in single- and double-stranded DNA, respectively. Parp1-mediated DNA repair in neurons plays a role in sleep: senses DNA damage in neurons and promotes sleep, facilitating efficient DNA repair. In addition to DNA repair, also involved in other processes, such as transcription regulation, programmed cell death, membrane repair, adipogenesis and innate immunity. Acts as a repressor of transcription: binds to nucleosomes and modulates chromatin structure in a manner similar to histone H1, thereby altering RNA polymerase II. Acts both as a positive and negative regulator of transcription elongation, depending on the context. Poly-ADP-ribose chains generated by parp1 also play a role in poly-ADP-ribose-dependent cell death, a process named parthanatos. Also acts as a negative regulator of the cGAS-STING pathway by mediating poly-ADP-ribosylation and inactivation of cgas. Acts as a negative regulator of adipogenesis by catalyzing poly ADP-ribosylation of histone H2B on 'Glu-35' (H2BE35ADPr). The sequence is that of Poly [ADP-ribose] polymerase 1 (PARP1) from Gallus gallus (Chicken).